The chain runs to 260 residues: HTH-type transcriptional repressor NanR (260 aa).

The region spanning 27–95 (KKLSEMVEEE…NGERARISRP (69 aa)) is the HTH gntR-type domain. The segment at residues 55–74 (ERELMAFFNVGRPSVREALA) is a DNA-binding region (H-T-H motif).

It belongs to the NanR family.

In terms of biological role, transcriptional repressor that controls expression of the genes required for the catabolism of sialic acids. This is HTH-type transcriptional repressor NanR from Edwardsiella tarda (strain FL6-60).